Reading from the N-terminus, the 112-residue chain is UPF0145 protein RB3016 (112 aa).

It belongs to the UPF0145 family.

The sequence is that of UPF0145 protein RB3016 from Rhodopirellula baltica (strain DSM 10527 / NCIMB 13988 / SH1).